Consider the following 600-residue polypeptide: Cytidine monophosphate-N-acetylneuraminic acid hydroxylase (600 aa).

One can recognise a Rieske domain in the interval 9 to 107; the sequence is LSPVEVASLK…VEMDENNRLL (99 aa). C49, H51, C70, and H73 together coordinate [2Fe-2S] cluster.

Belongs to the CMP-Neu5Ac hydroxylase family. The cofactor is [2Fe-2S] cluster.

The protein localises to the cytoplasm. The catalysed reaction is CMP-N-acetyl-beta-neuraminate + 2 Fe(II)-[cytochrome b5] + O2 + 2 H(+) = CMP-N-glycoloyl-beta-neuraminate + 2 Fe(III)-[cytochrome b5] + H2O. It participates in amino-sugar metabolism; N-acetylneuraminate metabolism. Functionally, sialic acids are components of carbohydrate chains of glycoconjugates and are involved in cell-cell recognition and cell-pathogen interactions. Catalyzes the conversion of CMP-N-acetylneuraminic acid (CMP-Neu5Ac) into its hydroxylated derivative CMP-N-glycolylneuraminic acid (CMP-Neu5Gc), a sialic acid abundantly expressed at the surface of many cells. This chain is Cytidine monophosphate-N-acetylneuraminic acid hydroxylase (CMAH), found in Gorilla gorilla gorilla (Western lowland gorilla).